Consider the following 310-residue polypeptide: Ribosomal RNA small subunit methyltransferase H (310 aa).

S-adenosyl-L-methionine-binding positions include 32–34 (GGH), Asp52, Phe79, Asp100, and Gln107.

This sequence belongs to the methyltransferase superfamily. RsmH family.

It localises to the cytoplasm. The catalysed reaction is cytidine(1402) in 16S rRNA + S-adenosyl-L-methionine = N(4)-methylcytidine(1402) in 16S rRNA + S-adenosyl-L-homocysteine + H(+). In terms of biological role, specifically methylates the N4 position of cytidine in position 1402 (C1402) of 16S rRNA. This chain is Ribosomal RNA small subunit methyltransferase H, found in Bacillus thuringiensis subsp. konkukian (strain 97-27).